A 257-amino-acid polypeptide reads, in one-letter code: Dihydroorotate dehydrogenase B (NAD(+)), electron transfer subunit (257 aa).

The FAD-binding FR-type domain maps to 2–101; the sequence is IRQEKMRVVS…LGPIGNGFPV (100 aa). FAD contacts are provided by residues 52-55, 69-71, and 76-77; these read RPIS, IYR, and GT. Positions 220, 225, 228, and 244 each coordinate [2Fe-2S] cluster.

It belongs to the PyrK family. In terms of assembly, heterotetramer of 2 PyrK and 2 PyrD type B subunits. It depends on [2Fe-2S] cluster as a cofactor. FAD is required as a cofactor.

It participates in pyrimidine metabolism; UMP biosynthesis via de novo pathway; orotate from (S)-dihydroorotate (NAD(+) route): step 1/1. Its function is as follows. Responsible for channeling the electrons from the oxidation of dihydroorotate from the FMN redox center in the PyrD type B subunit to the ultimate electron acceptor NAD(+). The sequence is that of Dihydroorotate dehydrogenase B (NAD(+)), electron transfer subunit from Lysinibacillus sphaericus (strain C3-41).